The chain runs to 305 residues: MQQPHIPVMLNEMLKFLAPKAGESYLDCTFGAGGYSKALLENCDCYVTALDRDPNVIKKAEEIKHNYKDRFDFVETNFGNCFAKLESKKFDGIVLDLGVSSMQLDIPDRGFSFLHDGPLDMRMSGQGLSAEEFINTAEEKDLADVIYKYGDETFSRRIAKKIVEVRKAARIDSTGKLADIVRSCIGFRKGKIDPATKTFQAIRIYINNELGELEQFLANVKNILKKDGRLVVVSFHSLEDRIVKNFFKENSEKPVARSKYAKEDIMLNPDKWLKIITNKAEIPSDKEISLNVRARSAKLRAAKKI.

Residues 33 to 35 (GGY), Asp-51, Phe-78, Asp-96, and Gln-103 contribute to the S-adenosyl-L-methionine site.

The protein belongs to the methyltransferase superfamily. RsmH family.

It is found in the cytoplasm. It carries out the reaction cytidine(1402) in 16S rRNA + S-adenosyl-L-methionine = N(4)-methylcytidine(1402) in 16S rRNA + S-adenosyl-L-homocysteine + H(+). Specifically methylates the N4 position of cytidine in position 1402 (C1402) of 16S rRNA. The polypeptide is Ribosomal RNA small subunit methyltransferase H (Rickettsia bellii (strain RML369-C)).